A 168-amino-acid chain; its full sequence is MRACAILVVAAAAVLTGSTAISSTDALELATLSKTAQDVELSSVAAQPRSNIQRRLRKHKTVNTNSEMEYESEAEARGLVPEKLTNLVNKFKKVGGEVMLKTKSLNQLKKLSEKMEEKSLYALTDLEKKGYTPETLRDAIKNTPPKGMKDADADELIKFYDEYWKIFH.

The signal sequence occupies residues 1–20 (MRACAILVVAAAAVLTGSTA). Residues 54 to 77 (RRLRKHKTVNTNSEMEYESEAEAR) carry the RxLR-dEER motif.

Belongs to the RxLR effector family.

It localises to the secreted. The protein resides in the host nucleus. Its subcellular location is the host cytoplasm. In terms of biological role, effector that enhances P.infestans colonization of Nicotiana benthamiana leaves. This chain is RxLR effector protein PITG_12737, found in Phytophthora infestans (strain T30-4) (Potato late blight agent).